A 227-amino-acid chain; its full sequence is Uracil-DNA glycosylase 2 (227 aa).

Catalysis depends on D67, which acts as the Proton acceptor.

Belongs to the uracil-DNA glycosylase (UDG) superfamily. UNG family.

Its subcellular location is the cytoplasm. The catalysed reaction is Hydrolyzes single-stranded DNA or mismatched double-stranded DNA and polynucleotides, releasing free uracil.. Excises uracil residues from the DNA which can arise as a result of misincorporation of dUMP residues by DNA polymerase or due to deamination of cytosine. In Streptomyces avermitilis (strain ATCC 31267 / DSM 46492 / JCM 5070 / NBRC 14893 / NCIMB 12804 / NRRL 8165 / MA-4680), this protein is Uracil-DNA glycosylase 2 (ung2).